The sequence spans 338 residues: Fusarubin cluster-specific transcription factor fsr6 (338 aa).

The segment at residues 16-44 (CDACTTAKVRCSRTHPCERCEDNGQAKEC) is a DNA-binding region (zn(2)-C6 fungal-type).

The protein resides in the nucleus. In terms of biological role, transcription factor that regulates the expression of the gene cluster that mediates the biosynthesis of fusarubins, highly pigmented naphthoquinones responsible for the coloration of the fruiting bodies. This Gibberella fujikuroi (strain CBS 195.34 / IMI 58289 / NRRL A-6831) (Bakanae and foot rot disease fungus) protein is Fusarubin cluster-specific transcription factor fsr6.